The following is a 37-amino-acid chain: Large ribosomal subunit protein bL36 (37 aa).

The protein belongs to the bacterial ribosomal protein bL36 family.

The sequence is that of Large ribosomal subunit protein bL36 from Tropheryma whipplei (strain Twist) (Whipple's bacillus).